A 1104-amino-acid polypeptide reads, in one-letter code: Translation initiation factor IF-2 (1104 aa).

Disordered stretches follow at residues 51-444 and 461-497; these read SLLG…LAAQ and LARP…RRRA. Low complexity-rich tracts occupy residues 60–119 and 127–164; these read AKPA…KPQA and ATPK…AAKP. Positions 189–202 are enriched in pro residues; it reads APTPRPTPARPTPR. Composition is skewed to low complexity over residues 203–215, 227–246, 311–336, and 366–396; these read PAGA…PTPG, GAPS…KPGA, STTG…PAGM, and PTKA…SFRP. A compositionally biased stretch (basic and acidic residues) spans 406–420; sequence GRPDWDDSARLDALR. The span at 481-495 shows a compositional bias: basic residues; sequence MRKRKKETARQRQRR. The region spanning 596–768 is the tr-type G domain; it reads RRPPVVTVMG…LLLVTEVEDL (173 aa). A G1 region spans residues 605-612; that stretch reads GHVDHGKT. 605–612 lines the GTP pocket; sequence GHVDHGKT. The segment at 630 to 634 is G2; it reads GITQH. Residues 655 to 658 form a G3 region; sequence DTPG. GTP contacts are provided by residues 655–659 and 709–712; these read DTPGH and NKID. Residues 709–712 are G4; it reads NKID. Residues 745 to 747 are G5; it reads SAI.

It belongs to the TRAFAC class translation factor GTPase superfamily. Classic translation factor GTPase family. IF-2 subfamily.

Its subcellular location is the cytoplasm. Functionally, one of the essential components for the initiation of protein synthesis. Protects formylmethionyl-tRNA from spontaneous hydrolysis and promotes its binding to the 30S ribosomal subunits. Also involved in the hydrolysis of GTP during the formation of the 70S ribosomal complex. This chain is Translation initiation factor IF-2, found in Synechococcus sp. (strain CC9605).